The primary structure comprises 761 residues: Protein transport protein SEC23 C (761 aa).

Zn(2+) contacts are provided by Cys60, Cys63, Cys82, and Cys85. Positions 60-85 are zinc finger-like; it reads CRTCRSVLNPYSVVDFSACNWGCPFC.

This sequence belongs to the SEC23/SEC24 family. SEC24 subfamily. As to quaternary structure, component of the coat protein complex II (COPII), composed of at least five proteins: the Sec23/24 complex, the Sec13/31 complex and Sar1.

It localises to the cytoplasmic vesicle. The protein resides in the COPII-coated vesicle membrane. It is found in the endoplasmic reticulum membrane. Its subcellular location is the membrane. Component of the coat protein complex II (COPII) which promotes the formation of transport vesicles from the endoplasmic reticulum (ER). The coat has two main functions, the physical deformation of the endoplasmic reticulum membrane into vesicles and the selection of cargo molecules. In Arabidopsis thaliana (Mouse-ear cress), this protein is Protein transport protein SEC23 C.